The sequence spans 74 residues: Cytoplasmic envelopment protein 3 (74 aa).

A lipid anchor (N-myristoyl glycine; by host) is attached at Gly2. The Di-leucine-like internalization motif motif lies at 15–16; it reads LV. The segment at 34–40 is asp/Glu-rich (acidic); that stretch reads SMEEFDI. A disordered region spans residues 36-74; it reads EEFDIPPPPPLPKPVFKQPGPYKIPARSQRCPSKRRDPY.

The protein belongs to the herpesviridae cytoplasmic envelopment protein 3 family. Interacts with cytoplasmic envelopment protein 2; this interaction is essential for the proper localization of each protein to the assembly complex and thus for the production of infectious virus. Post-translationally, myristoylation and palmitoylation (probably on one or more of the nearby cysteines at the N-terminus) enable membrane-binding and Golgi apparatus-specific targeting and are essential for efficient packaging. In terms of processing, phosphorylated. Phosphorylation does not seem to be required for recycling to the host Golgi apparatus. Packaging is selective for underphosphorylated forms.

It is found in the virion tegument. The protein resides in the virion membrane. It localises to the host cell membrane. Its subcellular location is the host Golgi apparatus membrane. Functionally, plays an important role in the cytoplasmic envelopment of tegument proteins and capsids during the assembly and egress processes. Also participates in viral entry at the fusion step probably by regulating the core fusion machinery. In Equine herpesvirus 1 (strain Ab4p) (EHV-1), this protein is Cytoplasmic envelopment protein 3.